A 325-amino-acid polypeptide reads, in one-letter code: Probable flavonol synthase 5 (325 aa).

The interval 1 to 21 is disordered; the sequence is MEEERDHNASESSLPSLSKQL. Positions 10-21 are enriched in polar residues; sequence SESSLPSLSKQL. The Fe2OG dioxygenase domain maps to 180–280; it reads TAEYVLRVNF…RISWPVFVAP (101 aa). 188–190 contacts 2-oxoglutarate; that stretch reads NFY. Fe cation contacts are provided by His205, Asp207, and His261. 271–273 is a 2-oxoglutarate binding site; that stretch reads RIS.

It belongs to the iron/ascorbate-dependent oxidoreductase family. It depends on Fe(2+) as a cofactor. As to expression, expressed in young seedlings.

The enzyme catalyses a (2R,3R)-dihydroflavonol + 2-oxoglutarate + O2 = a flavonol + succinate + CO2 + H2O. Its pathway is secondary metabolite biosynthesis; flavonoid biosynthesis. The sequence is that of Probable flavonol synthase 5 (FLS5) from Arabidopsis thaliana (Mouse-ear cress).